The following is a 627-amino-acid chain: Muscarinic acetylcholine receptor gar-2 (627 aa).

The Extracellular portion of the chain corresponds to Met-1–Ala-9. A helical membrane pass occupies residues Leu-10–Tyr-30. Residues Tyr-31–Asn-41 are Cytoplasmic-facing. Residues Tyr-42–Tyr-62 traverse the membrane as a helical segment. Over Thr-63–Leu-81 the chain is Extracellular. Cys-79 and Cys-160 are joined by a disulfide. Residues Trp-82–Val-102 form a helical membrane-spanning segment. Over Asp-103–Arg-122 the chain is Cytoplasmic. A helical transmembrane segment spans residues Val-123–Phe-143. The Extracellular segment spans residues Gly-144 to Met-172. Residues Gly-173–Ile-193 traverse the membrane as a helical segment. Residues Tyr-194–Thr-549 lie on the Cytoplasmic side of the membrane. Disordered stretches follow at residues Val-222–Pro-266, Arg-423–Gly-442, and Ala-449–Asn-475. Positions Asn-231–Gly-264 are enriched in low complexity. Basic and acidic residues predominate over residues Lys-459 to Asn-475. Residues Ile-550–Ile-570 form a helical membrane-spanning segment. Residues Tyr-571–Leu-586 lie on the Extracellular side of the membrane. The helical transmembrane segment at Tyr-587 to Asn-609 threads the bilayer. Over Gln-610 to Val-627 the chain is Cytoplasmic.

Belongs to the G-protein coupled receptor 1 family. Muscarinic acetylcholine receptor subfamily. As to expression, expressed in putative sensory neurons, many cells of the ventral cord and in the HSN motor neurons. Expressed in some cholinergic motor neurons and GABAergic motor neurons, which are the two major types of ventral cord motor neurons.

It is found in the cell membrane. Its subcellular location is the cell projection. It localises to the axon. Functionally, the muscarinic acetylcholine receptor mediates various cellular responses, including inhibition of adenylate cyclase, breakdown of phosphoinositides and modulation of potassium channels through the action of G proteins. Primary transducing effect is Pi turnover. Regulates the activity of ventral cord motor neurons. Couples to the G(o)-alpha G-protein subunit goa-1 to negatively regulate cholinergic receptor activity in the presence of high levels of the neurotransmitter acetylcholine in ventral cord motor neurons. As acetylcholine depolarizes body wall muscles, modulation of acetylcholine levels most likely results in the control locomotory behavior and egg-laying. The chain is Muscarinic acetylcholine receptor gar-2 from Caenorhabditis elegans.